Here is a 62-residue protein sequence, read N- to C-terminus: Conotoxin Lt5.8 (62 aa).

The first 19 residues, methionine 1–threonine 19, serve as a signal peptide directing secretion. Residues methionine 20–serine 47 constitute a propeptide that is removed on maturation. A Pyrrolidone carboxylic acid modification is found at glutamine 50. At glutamine 61 the chain carries Glutamine amide.

Belongs to the conotoxin T superfamily. Contains 2 disulfide bonds that can be either 'C1-C3, C2-C4' or 'C1-C4, C2-C3', since these disulfide connectivities have been observed for conotoxins with cysteine framework V (for examples, see AC P0DQQ7 and AC P81755). As to expression, expressed by the venom duct.

Its subcellular location is the secreted. This Conus litteratus (Lettered cone) protein is Conotoxin Lt5.8.